A 445-amino-acid chain; its full sequence is Probable histidine--tRNA ligase, cytoplasmic (445 aa).

Belongs to the class-II aminoacyl-tRNA synthetase family.

The protein localises to the cytoplasm. The catalysed reaction is tRNA(His) + L-histidine + ATP = L-histidyl-tRNA(His) + AMP + diphosphate + H(+). In Antonospora locustae (Microsporidian parasite), this protein is Probable histidine--tRNA ligase, cytoplasmic.